The primary structure comprises 221 residues: PKHD-type hydroxylase PMN2A_0775 (221 aa).

The region spanning 80-174 (LIHGVMFTQS…RHVCVGWIQS (95 aa)) is the Fe2OG dioxygenase domain. Fe cation is bound by residues His-98, Asp-100, and His-155. Arg-165 contacts 2-oxoglutarate.

Fe(2+) is required as a cofactor. Requires L-ascorbate as cofactor.

The sequence is that of PKHD-type hydroxylase PMN2A_0775 from Prochlorococcus marinus (strain NATL2A).